Consider the following 350-residue polypeptide: GTP 3',8-cyclase (350 aa).

The region spanning 27–245 (TFGRIATDLR…LRAHFTLVPD (219 aa)) is the Radical SAM core domain. Residue R36 participates in GTP binding. 2 residues coordinate [4Fe-4S] cluster: C43 and C47. Residue Y49 coordinates S-adenosyl-L-methionine. C50 lines the [4Fe-4S] cluster pocket. Position 87 (R87) interacts with GTP. G91 is a binding site for S-adenosyl-L-methionine. GTP is bound at residue T118. Position 142 (S142) interacts with S-adenosyl-L-methionine. Residue K179 coordinates GTP. M213 lines the S-adenosyl-L-methionine pocket. The [4Fe-4S] cluster site is built by C277 and C280. Residue 282 to 284 (RTR) coordinates GTP. Position 294 (C294) interacts with [4Fe-4S] cluster.

Belongs to the radical SAM superfamily. MoaA family. In terms of assembly, monomer and homodimer. Requires [4Fe-4S] cluster as cofactor.

It catalyses the reaction GTP + AH2 + S-adenosyl-L-methionine = (8S)-3',8-cyclo-7,8-dihydroguanosine 5'-triphosphate + 5'-deoxyadenosine + L-methionine + A + H(+). It functions in the pathway cofactor biosynthesis; molybdopterin biosynthesis. Its function is as follows. Catalyzes the cyclization of GTP to (8S)-3',8-cyclo-7,8-dihydroguanosine 5'-triphosphate. In Mycobacterium sp. (strain JLS), this protein is GTP 3',8-cyclase.